Consider the following 539-residue polypeptide: Lysosomal cobalamin transport escort protein LMBD1 (539 aa).

The Extracellular segment spans residues 1–7; it reads MAAAASE. Residues 8-28 form a helical membrane-spanning segment; it reads LLTGWFLFGLALLAILIFSWV. At 29 to 47 the chain is on the cytoplasmic side; sequence YVRKYQSRRESEVISTVTA. The helical transmembrane segment at 48–68 threads the bilayer; sequence IFALAVALISSALLPVDIFLV. The Extracellular portion of the chain corresponds to 69-97; the sequence is SYMKNQNGTFKDWADANVSRQIEDTVLYG. N-linked (GlcNAc...) asparagine glycans are attached at residues asparagine 75 and asparagine 85. Residues 98–118 form a helical membrane-spanning segment; it reads YYTLYSIILFCVFLWIPFVYF. Topologically, residues 119–141 are cytoplasmic; the sequence is YYEEKEEDDGNTCSQVKTALKYT. A helical transmembrane segment spans residues 142 to 162; sequence LGFITVCAVLLLIGAFVPLDI. Over 163-185 the chain is Extracellular; that stretch reads PNKKNSTEWEKVKLLFEEFGSSH. Residue asparagine 167 is glycosylated (N-linked (GlcNAc...) asparagine). The helical transmembrane segment at 186–206 threads the bilayer; that stretch reads GLTALSFSISSLTVIGMLAAI. Residues 207–302 are Cytoplasmic-facing; that stretch reads TYTAYGMSAL…KFCEAIRPLK (96 aa). A helical transmembrane segment spans residues 303–323; that stretch reads IVWGVFFIIVALLFTVSLFLS. Residues 324-361 are Extracellular-facing; sequence NLDKALHSAGFDSGFIILGTNLTNPLNMLLPVLQTVFP. Asparagine 344 carries an N-linked (GlcNAc...) asparagine glycan. A helical membrane pass occupies residues 362–382; it reads LDYILITTIVMYFIFTSMAGI. Topologically, residues 383–405 are cytoplasmic; sequence RNMGIWFFWIRLYKIRRGKTRPQ. Residues 406–426 form a helical membrane-spanning segment; it reads ALLFLCMILLLIVLHTSYMIY. Over 427–483 the chain is Extracellular; sequence SLAPQYVMYGSQKYLVQSNKTIDGQPKNVTTFVAKDCDADAPEDQCIVTRTYLFLHK. Asparagine 445 and asparagine 454 each carry an N-linked (GlcNAc...) asparagine glycan. The helical transmembrane segment at 484–504 threads the bilayer; it reads FWFFSAVYYFGNWAFIAVFLI. Residues 505 to 539 lie on the Cytoplasmic side of the membrane; the sequence is GLIVSCCKGKKSVIEGEVDEDDSDMSDDELSAYYC.

This sequence belongs to the LIMR family. LMBRD1 subfamily.

The protein localises to the endoplasmic reticulum membrane. Its subcellular location is the lysosome membrane. It localises to the cell membrane. Lysosomal membrane chaperone required to export cobalamin (vitamin B12) from the lysosome to the cytosol, allowing its conversion to cofactors. Targets ABCD4 transporter from the endoplasmic reticulum to the lysosome. Then forms a complex with lysosomal ABCD4 and cytoplasmic MMACHC to transport cobalamin across the lysosomal membrane. May play a role in mediating and regulating the internalization of the insulin receptor. In Gallus gallus (Chicken), this protein is Lysosomal cobalamin transport escort protein LMBD1 (LMBRD1).